The following is a 132-amino-acid chain: Small ribosomal subunit protein uS8 (132 aa).

It belongs to the universal ribosomal protein uS8 family. In terms of assembly, part of the 30S ribosomal subunit. Contacts proteins S5 and S12.

Functionally, one of the primary rRNA binding proteins, it binds directly to 16S rRNA central domain where it helps coordinate assembly of the platform of the 30S subunit. The chain is Small ribosomal subunit protein uS8 from Bartonella henselae (strain ATCC 49882 / DSM 28221 / CCUG 30454 / Houston 1) (Rochalimaea henselae).